Consider the following 72-residue polypeptide: V-type proton ATPase subunit e (72 aa).

At 1–2 the chain is on the lumenal side; it reads MS. A helical membrane pass occupies residues 3-23; that stretch reads FYTVVATFLSVVLASAVFWVL. Over 24-34 the chain is Cytoplasmic; that stretch reads APKENQTVWRS. Residues 35–55 traverse the membrane as a helical segment; sequence TIILSMSMMFLMWAVTYLSQL. Residues 56 to 72 lie on the Lumenal side of the membrane; the sequence is HPLVVPRRSDLRPEFAE.

Belongs to the V-ATPase e1/e2 subunit family. In terms of assembly, V-ATPase is a heteromultimeric enzyme composed of a peripheral catalytic V1 complex (components A to H) attached to an integral membrane V0 proton pore complex (components: a, c, c', c'', d, e, f and VOA1).

It localises to the vacuole membrane. Its function is as follows. Subunit of the V0 complex of vacuolar(H+)-ATPase (V-ATPase), a multisubunit enzyme composed of a peripheral complex (V1) that hydrolyzes ATP and a membrane integral complex (V0) that translocates protons. V-ATPase is responsible for acidifying and maintaining the pH of intracellular compartments. The protein is V-type proton ATPase subunit e (VMA9) of Eremothecium gossypii (strain ATCC 10895 / CBS 109.51 / FGSC 9923 / NRRL Y-1056) (Yeast).